Here is a 491-residue protein sequence, read N- to C-terminus: Delayed-rectifier potassium channel regulatory subunit KCNS3 (491 aa).

Topologically, residues Met-1–Leu-182 are cytoplasmic. The chain crosses the membrane as a helical span at residues Ser-183–Val-204. Residues His-205–Pro-220 lie on the Extracellular side of the membrane. A helical membrane pass occupies residues Val-221–Ala-243. Over Ala-244–Pro-254 the chain is Cytoplasmic. A helical transmembrane segment spans residues Leu-255–Lys-275. The Extracellular segment spans residues Glu-276–Met-285. A helical; Voltage-sensor transmembrane segment spans residues Gly-286 to His-306. The Cytoplasmic portion of the chain corresponds to Ser-307–Tyr-321. Residues His-322–Tyr-343 form a helical membrane-spanning segment. Over Ser-344 to Ile-357 the chain is Extracellular. An intramembrane region (helical) is located at residues Pro-358 to Thr-369. The short motif at Thr-370 to Asp-375 is the Selectivity filter element. Residues Thr-370 to His-377 lie within the membrane without spanning it. The Extracellular segment spans residues Pro-378–Lys-384. A helical membrane pass occupies residues Ile-385 to Tyr-413. The Cytoplasmic portion of the chain corresponds to Gln-414–Lys-491.

The protein belongs to the potassium channel family. S (TC 1.A.1.2) subfamily. Kv9.3/KCNS3 sub-subfamily. Heterotetramer with KCNB1. Does not form homomultimers.

The protein localises to the cell membrane. In terms of biological role, potassium channel regulatory subunit that modulates the delayed rectifier potassium channel activity of KCNB1 by namely slowing down the deactivation and inactivation time constants. While it does not form functional channel on its own, it can form functional heterotetrameric channels with KCNB1. This Mus musculus (Mouse) protein is Delayed-rectifier potassium channel regulatory subunit KCNS3.